A 279-amino-acid polypeptide reads, in one-letter code: NADPH-dependent 7-cyano-7-deazaguanine reductase (279 aa).

86–88 provides a ligand contact to substrate; the sequence is IES. NADPH is bound at residue 88 to 89; that stretch reads SK. The Thioimide intermediate role is filled by C187. D194 functions as the Proton donor in the catalytic mechanism. 226–227 lines the substrate pocket; sequence HE. 255–256 is a binding site for NADPH; that stretch reads RG.

It belongs to the GTP cyclohydrolase I family. QueF type 2 subfamily. As to quaternary structure, homodimer.

The protein localises to the cytoplasm. It carries out the reaction 7-aminomethyl-7-carbaguanine + 2 NADP(+) = 7-cyano-7-deazaguanine + 2 NADPH + 3 H(+). Its pathway is tRNA modification; tRNA-queuosine biosynthesis. Catalyzes the NADPH-dependent reduction of 7-cyano-7-deazaguanine (preQ0) to 7-aminomethyl-7-deazaguanine (preQ1). The polypeptide is NADPH-dependent 7-cyano-7-deazaguanine reductase (Glaesserella parasuis serovar 5 (strain SH0165) (Haemophilus parasuis)).